A 111-amino-acid chain; its full sequence is Translation initiation factor 1A 1 (111 aa).

Residues 1–26 are disordered; the sequence is MTLADLKKPTSRATPSTEETFTRVRT. The S1-like domain occupies 22–96; that stretch reads TRVRTPRREN…EKADVIWKYT (75 aa).

The protein belongs to the eIF-1A family.

Functionally, seems to be required for maximal rate of protein biosynthesis. Enhances ribosome dissociation into subunits and stabilizes the binding of the initiator Met-tRNA(I) to 40 S ribosomal subunits. In Methanosarcina acetivorans (strain ATCC 35395 / DSM 2834 / JCM 12185 / C2A), this protein is Translation initiation factor 1A 1 (eIF1A1).